A 179-amino-acid polypeptide reads, in one-letter code: Putative endogenous retrovirus group FC1 Env polyprotein (179 aa).

An N-terminal signal peptide occupies residues 1 to 22; that stretch reads MARPSPLCLLLLLTLLPPIVPS. A truncated surface protein region spans residues 23–179; it reads NSLLTEPPFR…SKLRIFRTYV (157 aa). The N-linked (GlcNAc...) asparagine glycan is linked to asparagine 69.

This sequence belongs to the gamma type-C retroviral envelope protein family. HERV class-I F(c)1 env subfamily.

Its subcellular location is the virion. Functionally, retroviral envelope proteins mediate receptor recognition and membrane fusion during early infection. Endogenous envelope proteins may have kept, lost or modified their original function during evolution. The chain is Putative endogenous retrovirus group FC1 Env polyprotein (ERVFC1) from Gorilla gorilla gorilla (Western lowland gorilla).